We begin with the raw amino-acid sequence, 56 residues long: Cytochrome b-c1 complex subunit 10 (56 aa).

At 1–12 (MVTRFLGPRYRE) the chain is on the mitochondrial matrix side. A helical transmembrane segment spans residues 13–35 (LVKNWVPTAYTWGAVGAVGLVWA). Residues 36-56 (TDWRLILDWVPYINGKFKKDN) lie on the Mitochondrial intermembrane side of the membrane.

The protein belongs to the UQCR11/QCR10 family. Component of the ubiquinol-cytochrome c oxidoreductase (cytochrome b-c1 complex, complex III, CIII), a multisubunit enzyme composed of 11 subunits. The complex is composed of 3 respiratory subunits cytochrome b, cytochrome c1 and Rieske protein UQCRFS1, 2 core protein subunits UQCRC1/QCR1 and UQCRC2/QCR2, and 6 low-molecular weight protein subunits UQCRH/QCR6, UQCRB/QCR7, UQCRQ/QCR8, UQCR10/QCR9, UQCR11/QCR10 and subunit 9, the cleavage product of Rieske protein UQCRFS1. The complex exists as an obligatory dimer and forms supercomplexes (SCs) in the inner mitochondrial membrane with NADH-ubiquinone oxidoreductase (complex I, CI) and cytochrome c oxidase (complex IV, CIV), resulting in different assemblies (supercomplex SCI(1)III(2)IV(1) and megacomplex MCI(2)III(2)IV(2)).

It is found in the mitochondrion inner membrane. Its function is as follows. Component of the ubiquinol-cytochrome c oxidoreductase, a multisubunit transmembrane complex that is part of the mitochondrial electron transport chain which drives oxidative phosphorylation. The respiratory chain contains 3 multisubunit complexes succinate dehydrogenase (complex II, CII), ubiquinol-cytochrome c oxidoreductase (cytochrome b-c1 complex, complex III, CIII) and cytochrome c oxidase (complex IV, CIV), that cooperate to transfer electrons derived from NADH and succinate to molecular oxygen, creating an electrochemical gradient over the inner membrane that drives transmembrane transport and the ATP synthase. The cytochrome b-c1 complex catalyzes electron transfer from ubiquinol to cytochrome c, linking this redox reaction to translocation of protons across the mitochondrial inner membrane, with protons being carried across the membrane as hydrogens on the quinol. In the process called Q cycle, 2 protons are consumed from the matrix, 4 protons are released into the intermembrane space and 2 electrons are passed to cytochrome c. QCR10 has a role in CIII assembly and RIP1 stability. The sequence is that of Cytochrome b-c1 complex subunit 10 (UQCR11) from Homo sapiens (Human).